We begin with the raw amino-acid sequence, 379 residues long: Glutamate 5-kinase (379 aa).

Residue Lys15 coordinates ATP. Substrate contacts are provided by Ser59, Asp146, and Asn158. 178-179 (TD) provides a ligand contact to ATP. In terms of domain architecture, PUA spans 285-363 (RGAVTVDVGA…SEFERLLGYS (79 aa)).

Belongs to the glutamate 5-kinase family.

It is found in the cytoplasm. The catalysed reaction is L-glutamate + ATP = L-glutamyl 5-phosphate + ADP. Its pathway is amino-acid biosynthesis; L-proline biosynthesis; L-glutamate 5-semialdehyde from L-glutamate: step 1/2. Functionally, catalyzes the transfer of a phosphate group to glutamate to form L-glutamate 5-phosphate. This chain is Glutamate 5-kinase, found in Paracidovorax citrulli (strain AAC00-1) (Acidovorax citrulli).